Consider the following 442-residue polypeptide: 5'-deoxyadenosine deaminase (442 aa).

Zn(2+)-binding residues include H72 and H74. Residues E101 and H193 each coordinate substrate. Residue H220 coordinates Zn(2+). The substrate site is built by E223 and D309. A Zn(2+)-binding site is contributed by D309.

The protein belongs to the metallo-dependent hydrolases superfamily. MTA/SAH deaminase family. As to quaternary structure, homotetramer. Zn(2+) is required as a cofactor.

It catalyses the reaction 5'-deoxyadenosine + H2O + H(+) = 5'-deoxyinosine + NH4(+). The catalysed reaction is S-adenosyl-L-homocysteine + H2O + H(+) = S-inosyl-L-homocysteine + NH4(+). The enzyme catalyses S-methyl-5'-thioadenosine + H2O + H(+) = S-methyl-5'-thioinosine + NH4(+). It carries out the reaction adenosine + H2O + H(+) = inosine + NH4(+). It functions in the pathway amino-acid biosynthesis; S-adenosyl-L-methionine biosynthesis. Its function is as follows. Catalyzes the deamination of three SAM-derived enzymatic products, namely 5'-deoxyadenosine, S-adenosyl-L-homocysteine, and 5'-methylthioadenosine, to produce the inosine analogs. Can also deaminate adenosine. The preferred substrate for this enzyme is 5'-deoxyadenosine, but all these substrates are efficiently deaminated. Likely functions in a S-adenosyl-L-methionine (SAM) recycling pathway from S-adenosyl-L-homocysteine (SAH) produced from SAM-dependent methylation reactions. May also be involved in the recycling of 5'-deoxyadenosine, whereupon the 5'-deoxyribose moiety of 5'-deoxyinosine is further metabolized to deoxyhexoses used for the biosynthesis of aromatic amino acids in methanogens. This is 5'-deoxyadenosine deaminase from Methanoregula boonei (strain DSM 21154 / JCM 14090 / 6A8).